A 156-amino-acid chain; its full sequence is Neuroactive polyprotein R15 (156 aa).

Residues Met-1–Leu-26 form the signal peptide. The propeptide occupies Pro-27 to Ser-48. A disulfide bridge connects residues Cys-74 and Cys-81. A Pyrrolidone carboxylic acid modification is found at Gln-120.

As to expression, expressed within the abdominal ganglion in neurons R15, RB(HE), the two L9(G) gill motoneurons, and L40 interneuron, all are parts of autonomic control circuit that contributes to implementing a central command to coordinate autonomic activity with escape locomotion.

It is found in the secreted. In terms of biological role, the alpha-1 peptide acts as an osmoregulatory peptide, increasing blood volume, and also modulates the activity of a set of cardiac motor neurons that control heart rate. This chain is Neuroactive polyprotein R15, found in Aplysia californica (California sea hare).